A 221-amino-acid chain; its full sequence is MASHQDKASYQAGETKARTEEKTGQAVGATKDTAQHAKDRAADAAGHAAGKGQDAKEATKQKASDTGSYLGKKTDEAKHKAGETTEATKHKAGETTEAAKQKAGETTEAAKQKAGETTETTKQKAGETTEAARQKAADAMEAAKQKAAEAGQYAKDTAVSGKDKSGGVIQQATEQVKSAAAGRKDAVMSTLGMGGDNKQGDANTNTNTNTTKDSSTITRDH.

The disordered stretch occupies residues 1-221 (MASHQDKASY…KDSSTITRDH (221 aa)). Positions 33–42 (TAQHAKDRAA) are enriched in basic and acidic residues. The span at 43–52 (DAAGHAAGKG) shows a compositional bias: low complexity. 2 stretches are compositionally biased toward basic and acidic residues: residues 53–63 (QDAKEATKQKA) and 72–147 (KKTD…KQKA). Over residues 212–221 (KDSSTITRDH) the composition is skewed to polar residues.

It belongs to the LEA type 4 family.

This Zea mays (Maize) protein is Late embryogenesis abundant protein, group 3 (MGL3).